The chain runs to 511 residues: Putative polyol transporter 2 (511 aa).

Transmembrane regions (helical) follow at residues 25–45 (FAFACAILASMTSIILGYDIG), 63–83 (VQLEILMGILNIYSLIGSGAA), 94–114 (YTIVLAGFFFFCGALLMGFAT), 117–137 (PFIMVGRFVAGIGVGYAMMIA), 156–176 (FPEIFINIGILLGYVSNYFFA), 186–206 (FMLGIGAVPSVFLAIGVLAMP), 284–304 (ILIACLGIHFSQQASGIDAVV), 324–344 (LATVAVGVVKTLFIVVGTCLV), 351–371 (ALLLTSMGGMFFSLTALGTSL), 384–404 (WAIGLAVTTVMTFVATFSLGA), 424–444 (GASLGVMLNRLMSGIIGMTFL), and 454–474 (GAFLLFAGVAVAAWVFFFTFL).

This sequence belongs to the major facilitator superfamily. Sugar transporter (TC 2.A.1.1) family.

The protein resides in the membrane. Functionally, plasma membrane sugar-proton symporter. The protein is Putative polyol transporter 2 (PLT2) of Arabidopsis thaliana (Mouse-ear cress).